A 415-amino-acid polypeptide reads, in one-letter code: MTLLALGINHNTATLDVREKVAFSPAELEVALCALRESGLAEEVAILSTCNRTEIYCETGAEAQHLLVWLAEHKAASAQELQHAHYARWGDDAARHMMAVASGLDSLVLGEPQILGQMKSCYAVAREAGVLGRGLHDAFQRVFAVAKRVRSETAIGENPVSVAYAAVSLAQQIFSDLKQDTALLIGAGETIELVARHLKNQGIKKLIVANRTLENAHALAKEFAAEAILLADIPEYLPTADIVISSTASQLPLLGKGAVEVALKKRKHKPMFMVDIAVPRDIEPQVGDLADVYLFTVDDLKEVIDENKKSREEAAKTARTIIDEGVERYQLDQRALSAVELVKDFRQQTEAVRDQEVQKALNALRSGADPEELLLTLSRNLTNKFMHQPTTALKRASSEGREQLLQDFKSLFGLD.

Substrate-binding positions include 49–52 (TCNR), serine 106, 111–113 (EPQ), and glutamine 117. Cysteine 50 acts as the Nucleophile in catalysis. 186-191 (GAGETI) is an NADP(+) binding site.

This sequence belongs to the glutamyl-tRNA reductase family. As to quaternary structure, homodimer.

It catalyses the reaction (S)-4-amino-5-oxopentanoate + tRNA(Glu) + NADP(+) = L-glutamyl-tRNA(Glu) + NADPH + H(+). The protein operates within porphyrin-containing compound metabolism; protoporphyrin-IX biosynthesis; 5-aminolevulinate from L-glutamyl-tRNA(Glu): step 1/2. Catalyzes the NADPH-dependent reduction of glutamyl-tRNA(Glu) to glutamate 1-semialdehyde (GSA). The sequence is that of Glutamyl-tRNA reductase from Teredinibacter turnerae (strain ATCC 39867 / T7901).